We begin with the raw amino-acid sequence, 478 residues long: D(1B) dopamine receptor (478 aa).

Residues Met1–Gln38 lie on the Extracellular side of the membrane. N-linked (GlcNAc...) asparagine glycosylation is present at Asn7. A helical transmembrane segment spans residues Val39–Val64. At Arg65 to Asn75 the chain is on the cytoplasmic side. A helical transmembrane segment spans residues Ile76–Ala102. The Extracellular segment spans residues Gly103–Cys111. Residues Cys111 and Cys211 are joined by a disulfide bond. The chain crosses the membrane as a helical span at residues Asp112 to Val134. Residues Asp135–Arg153 are Cytoplasmic-facing. The chain crosses the membrane as a helical span at residues Val154 to His179. Topologically, residues Arg180–Leu215 are extracellular. The helical transmembrane segment at Asn216–Thr240 threads the bilayer. Residues Arg241–Phe289 lie on the Cytoplasmic side of the membrane. Residues Lys290–Ser317 traverse the membrane as a helical segment. Residues Ser318–Thr335 are Extracellular-facing. A helical membrane pass occupies residues Phe336–Asn357. The Cytoplasmic portion of the chain corresponds to Ala358–Ala478. The S-palmitoyl cysteine moiety is linked to residue Cys370. The segment at Gly416–Asp446 is disordered. Over residues Val420–Gly430 the composition is skewed to acidic residues.

This sequence belongs to the G-protein coupled receptor 1 family.

The protein resides in the cell membrane. Functionally, dopamine receptor whose activity is mediated by G proteins which activate adenylyl cyclase. In Mus musculus (Mouse), this protein is D(1B) dopamine receptor (Drd5).